Consider the following 383-residue polypeptide: MKNVLPPFIEIYRALIATPSISATEESLDQSNASLITLLAGWFSDLGFNVEVQPVPGTRNKFNMLASTGHGAGGLLLTGHTDTVPFDDGRWTRDPFTLTEHDNKLYGLGTADMKGFFAFILDALRDVDVTKLKKPLYILATADEETSMAGARYFSKTTALRPDCAIIGEPTSLQPIRAHKGHISNVVRVLGQSGHSSDPARGVNAIELMHDAIGHIMQLRDSLKARYHYEAFTVPYPTLNLGHIHGGDASNRICACCELHMDIRPLPGMTLNDLNGLLNDALAPVSERWPGRLTVAELHPPIPGYECPPDHQLVEVVEKLLGTKTDVVNYCTEAPFMQTLCPTLVLGPGSINQAHQPDEYLETRFIKPTRELITQVVHHFCWH.

His-80 provides a ligand contact to Zn(2+). The active site involves Asp-82. Residue Asp-112 participates in Zn(2+) binding. Glu-144 is an active-site residue. Zn(2+) contacts are provided by Glu-145, Glu-169, and His-355.

This sequence belongs to the peptidase M20A family. ArgE subfamily. In terms of assembly, homodimer. Zn(2+) is required as a cofactor. Co(2+) serves as cofactor. It depends on glutathione as a cofactor.

The protein localises to the cytoplasm. It carries out the reaction N(2)-acetyl-L-ornithine + H2O = L-ornithine + acetate. The protein operates within amino-acid biosynthesis; L-arginine biosynthesis; L-ornithine from N(2)-acetyl-L-ornithine (linear): step 1/1. Functionally, catalyzes the hydrolysis of the amide bond of N(2)-acetylated L-amino acids. Cleaves the acetyl group from N-acetyl-L-ornithine to form L-ornithine, an intermediate in L-arginine biosynthesis pathway, and a branchpoint in the synthesis of polyamines. This Salmonella typhimurium (strain LT2 / SGSC1412 / ATCC 700720) protein is Acetylornithine deacetylase.